Reading from the N-terminus, the 83-residue chain is Large ribosomal subunit protein bL27c (83 aa).

Residues 1-24 (MAHKKGAGSTKNGRDSNAKRLGVK) form a disordered region.

This sequence belongs to the bacterial ribosomal protein bL27 family.

The protein resides in the plastid. It is found in the chloroplast. This chain is Large ribosomal subunit protein bL27c (rpl27), found in Trieres chinensis (Marine centric diatom).